The chain runs to 735 residues: Photosystem I P700 chlorophyll a apoprotein A2 (735 aa).

8 consecutive transmembrane segments (helical) span residues 47-70 (IFAS…FHVA), 136-159 (LYNG…LHLQ), 176-200 (LNHH…HVAI), 274-292 (MAHH…GHMY), 331-354 (LHFQ…QHMY), 370-396 (AALY…IFFI), 418-440 (AIIS…LYVH), and 518-536 (FLVH…LILV). 2 residues coordinate [4Fe-4S] cluster: cysteine 560 and cysteine 569. 2 consecutive transmembrane segments (helical) span residues 576-597 (AFYL…YWHW) and 644-666 (LSVW…MFLI). Residues histidine 655, methionine 663, and tyrosine 671 each coordinate chlorophyll a. Tryptophan 672 lines the phylloquinone pocket. Residues 708 to 728 (LVGLVHFSVGYIFTYAAFLIA) form a helical membrane-spanning segment.

This sequence belongs to the PsaA/PsaB family. As to quaternary structure, the PsaA/B heterodimer binds the P700 chlorophyll special pair and subsequent electron acceptors. PSI consists of a core antenna complex that captures photons, and an electron transfer chain that converts photonic excitation into a charge separation. The eukaryotic PSI reaction center is composed of at least 11 subunits. P700 is a chlorophyll a/chlorophyll a' dimer, A0 is one or more chlorophyll a, A1 is one or both phylloquinones and FX is a shared 4Fe-4S iron-sulfur center. serves as cofactor.

Its subcellular location is the plastid. It is found in the chloroplast thylakoid membrane. It catalyses the reaction reduced [plastocyanin] + hnu + oxidized [2Fe-2S]-[ferredoxin] = oxidized [plastocyanin] + reduced [2Fe-2S]-[ferredoxin]. PsaA and PsaB bind P700, the primary electron donor of photosystem I (PSI), as well as the electron acceptors A0, A1 and FX. PSI is a plastocyanin/cytochrome c6-ferredoxin oxidoreductase, converting photonic excitation into a charge separation, which transfers an electron from the donor P700 chlorophyll pair to the spectroscopically characterized acceptors A0, A1, FX, FA and FB in turn. Oxidized P700 is reduced on the lumenal side of the thylakoid membrane by plastocyanin or cytochrome c6. The protein is Photosystem I P700 chlorophyll a apoprotein A2 of Stigeoclonium helveticum (Green alga).